Here is a 369-residue protein sequence, read N- to C-terminus: Cyclic AMP receptor-like protein A (369 aa).

Over 1-4 the chain is Extracellular; it reads MIQI. A helical membrane pass occupies residues 5–22; the sequence is LLSTFISFIIIIVSSNDI. The Cytoplasmic segment spans residues 23-72; the sequence is RSGENDNFNNNKMINNFLTTITTNDTIIIKETESPNDYDFSKEQIESLDK. A helical transmembrane segment spans residues 73–93; that stretch reads IVYFSSTMGIVGALFIIVSFF. At 94 to 100 the chain is on the extracellular side; sequence LFKAART. A helical membrane pass occupies residues 101 to 121; the sequence is FATKMIFFLSLSDLFAAIFYL. Over 122–146 the chain is Cytoplasmic; that stretch reads PYYRDSDIMCNLQGMGLVFFLSSSY. Residues 147-167 form a helical membrane-spanning segment; the sequence is LWTMCISISLFMVFFTTIFEL. Topologically, residues 168–173 are extracellular; sequence NHWFKY. The helical transmembrane segment at 174-194 threads the bilayer; it reads FHFICWGIPLFTAIISLIFHA. At 195 to 212 the chain is on the cytoplasmic side; it reads YGKTGSWCFISDPTSIFR. A helical membrane pass occupies residues 213–233; sequence LLYYLPLIVVFFINLVVFIAI. Residues 234 to 247 are Extracellular-facing; the sequence is RWKISQHSNSLVSR. The helical transmembrane segment at 248–268 threads the bilayer; sequence VNIIVSFYLIAFSLSQLPTII. Residues 269-369 lie on the Cytoplasmic side of the membrane; sequence NSIQNFSDPD…KLIIDDYNRV (101 aa).

It belongs to the G-protein coupled receptor 5 family.

It is found in the membrane. Functionally, receptor for cAMP which may play a role in prestalk cell differentiation. May act as a negative regulator of cell growth. This chain is Cyclic AMP receptor-like protein A (crlA), found in Dictyostelium discoideum (Social amoeba).